The following is a 785-amino-acid chain: E3 UFM1-protein ligase 1 homolog (785 aa).

The interval 404–483 is disordered; the sequence is GGNASNQLDD…GGGGSNKKSV (80 aa).

It belongs to the UFL1 family.

In terms of biological role, E3 UFM1-protein ligase that mediates ufmylation of target proteins. The polypeptide is E3 UFM1-protein ligase 1 homolog (Drosophila willistoni (Fruit fly)).